A 314-amino-acid chain; its full sequence is Olfactory receptor 4K2 (314 aa).

The Extracellular portion of the chain corresponds to 1–25; it reads MDVGNKSTMSEFVLLGLSNSWELQM. The N-linked (GlcNAc...) asparagine glycan is linked to Asn-5. Residues 26–49 form a helical membrane-spanning segment; the sequence is FFFMVFSLLYVATMVGNSLIVITV. The Cytoplasmic portion of the chain corresponds to 50-57; sequence IVDPHLHS. The chain crosses the membrane as a helical span at residues 58–79; that stretch reads PMYFLLTNLSIIDMSLASFATP. Residues 80 to 100 are Extracellular-facing; it reads KMITDYLTGHKTISFDGCLTQ. An intrachain disulfide couples Cys-97 to Cys-189. Residues 101–120 traverse the membrane as a helical segment; the sequence is IFFLHLFTGTEIILLMAMSF. At 121-139 the chain is on the cytoplasmic side; the sequence is DRYIAICKPLHYASVISPQ. Residues 140-158 traverse the membrane as a helical segment; that stretch reads VCVALVVASWIMGVMHSMS. Topologically, residues 159 to 195 are extracellular; that stretch reads QVIFALTLPFCGPYEVDSFFCDLPVVFQLACVDTYVL. The chain crosses the membrane as a helical span at residues 196-219; the sequence is GLFMISTSGIIALSCFIVLFNSYV. The Cytoplasmic portion of the chain corresponds to 220–235; the sequence is IVLVTVKHHSSRGSSK. Residues 236 to 258 form a helical membrane-spanning segment; it reads ALSTCTAHFIVVFLFFGPCIFIY. Residues 259–269 lie on the Extracellular side of the membrane; the sequence is MWPLSSFLTDK. The helical transmembrane segment at 270–289 threads the bilayer; the sequence is ILSVFYTIFTPTLNPIIYTL. Residues 290–314 are Cytoplasmic-facing; that stretch reads RNQEVKIAMRKLKNRFLNFNKAMPS.

This sequence belongs to the G-protein coupled receptor 1 family.

The protein localises to the cell membrane. Odorant receptor. The polypeptide is Olfactory receptor 4K2 (OR4K2) (Homo sapiens (Human)).